The sequence spans 734 residues: Photosystem I P700 chlorophyll a apoprotein A2 (734 aa).

Transmembrane regions (helical) follow at residues 46–69 (IFAS…FHVA), 135–158 (LYFG…LHLQ), 175–199 (LNHH…HVAI), 273–291 (IAHH…GHMY), 330–353 (LHMQ…QHMY), 369–395 (AALY…IFFV), 417–439 (AIIS…LYIH), and 517–535 (FLVH…LILV). [4Fe-4S] cluster is bound by residues Cys559 and Cys568. Transmembrane regions (helical) follow at residues 575–596 (AFYL…YWHW) and 643–665 (QAVW…MFLI). His654, Met662, and Tyr670 together coordinate chlorophyll a. Trp671 provides a ligand contact to phylloquinone. A helical membrane pass occupies residues 707–727 (LVGLAHFTVGFIFTFAPFVIA).

Belongs to the PsaA/PsaB family. The PsaA/B heterodimer binds the P700 chlorophyll special pair and subsequent electron acceptors. PSI consists of a core antenna complex that captures photons, and an electron transfer chain that converts photonic excitation into a charge separation. The eukaryotic PSI reaction center is composed of at least 11 subunits. P700 is a chlorophyll a/chlorophyll a' dimer, A0 is one or more chlorophyll a, A1 is one or both phylloquinones and FX is a shared 4Fe-4S iron-sulfur center. serves as cofactor.

Its subcellular location is the plastid. The protein resides in the chloroplast thylakoid membrane. It carries out the reaction reduced [plastocyanin] + hnu + oxidized [2Fe-2S]-[ferredoxin] = oxidized [plastocyanin] + reduced [2Fe-2S]-[ferredoxin]. PsaA and PsaB bind P700, the primary electron donor of photosystem I (PSI), as well as the electron acceptors A0, A1 and FX. PSI is a plastocyanin/cytochrome c6-ferredoxin oxidoreductase, converting photonic excitation into a charge separation, which transfers an electron from the donor P700 chlorophyll pair to the spectroscopically characterized acceptors A0, A1, FX, FA and FB in turn. Oxidized P700 is reduced on the lumenal side of the thylakoid membrane by plastocyanin or cytochrome c6. This chain is Photosystem I P700 chlorophyll a apoprotein A2, found in Emiliania huxleyi (Coccolithophore).